A 349-amino-acid chain; its full sequence is UDP-galactose/UDP-glucose transporter 4 (349 aa).

8 helical membrane passes run 23 to 43, 56 to 76, 115 to 135, 140 to 160, 167 to 187, 205 to 225, 248 to 268, and 293 to 313; these read WQQFLICSSGFFFGYLVNGIC, GWYFTFAQGLVYIALIYMYGF, IMFKSTKVLPVMVMGAFIPGL, PVHEYISAMLLVIGLILFTLA, NFSIIGVMMISGALIMDAFLG, MLFCSTVVGLPFLLAPMILTG, AMATFIGQVSVLSLIALFGAA, and LTEQHGTGLLLIFMGIILKMV. The interval 316 to 349 is disordered; it reads PNPNPKSSGSGQTPGKLERVKFEKEDDEESRPLV. A compositionally biased stretch (acidic residues) spans 340–349; it reads EDDEESRPLV.

This sequence belongs to the nucleotide-sugar transporter family. UDP-galactose:UMP antiporter (TC 2.A.7.11) subfamily.

The protein localises to the membrane. Functionally, sugar transporter involved in the transport of nucleotide-sugars from cytoplasm into the Golgi and/or the endoplasmic reticulum. The polypeptide is UDP-galactose/UDP-glucose transporter 4 (Arabidopsis thaliana (Mouse-ear cress)).